The primary structure comprises 146 residues: Large ribosomal subunit protein uL15 (146 aa).

The segment covering M1–R13 has biased composition (basic and acidic residues). Residues M1–M55 form a disordered region. Gly residues predominate over residues S42–G52.

The protein belongs to the universal ribosomal protein uL15 family. In terms of assembly, part of the 50S ribosomal subunit.

Its function is as follows. Binds to the 23S rRNA. The polypeptide is Large ribosomal subunit protein uL15 (Clostridium tetani (strain Massachusetts / E88)).